The sequence spans 242 residues: MAKRGKRYQQLLSLIEKGKLYSPKEAVSLVKKLATAKFDETINLAVRLGVDPRHADQQVRGTVVLPYGTGKEKKVLVFAEGEKAQEAREAGADYVGGEDLVKQIESGWLDFDVAIATPDIMGTLKIPSRLGKILGPRGLMPNPKTGTVTNDIAKAVKEYKAGRVEFRTDRYGIVHVPIGKASFSEEALYKNLMTVLGTLLRLKPAAAKGQYFKSIYISPSMGPSVPIDTKNIADLIKQEEAA.

This sequence belongs to the universal ribosomal protein uL1 family. Part of the 50S ribosomal subunit.

Its function is as follows. Binds directly to 23S rRNA. The L1 stalk is quite mobile in the ribosome, and is involved in E site tRNA release. In terms of biological role, protein L1 is also a translational repressor protein, it controls the translation of the L11 operon by binding to its mRNA. The polypeptide is Large ribosomal subunit protein uL1 (Dictyoglomus thermophilum (strain ATCC 35947 / DSM 3960 / H-6-12)).